The following is a 164-amino-acid chain: Ribonuclease H (164 aa).

In terms of domain architecture, RNase H type-1 spans 9-150 (DMPRVTIYTD…ADTLANAATD (142 aa)). The Mg(2+) site is built by aspartate 18, glutamate 56, aspartate 78, and aspartate 142.

Belongs to the RNase H family. Monomer. Mg(2+) serves as cofactor.

The protein resides in the cytoplasm. It carries out the reaction Endonucleolytic cleavage to 5'-phosphomonoester.. In terms of biological role, endonuclease that specifically degrades the RNA of RNA-DNA hybrids. This is Ribonuclease H from Chromohalobacter salexigens (strain ATCC BAA-138 / DSM 3043 / CIP 106854 / NCIMB 13768 / 1H11).